The chain runs to 209 residues: A-type ATP synthase subunit D (209 aa).

Belongs to the V-ATPase D subunit family. As to quaternary structure, has multiple subunits with at least A(3), B(3), C, D, E, F, H, I and proteolipid K(x).

The protein localises to the cell membrane. Functionally, component of the A-type ATP synthase that produces ATP from ADP in the presence of a proton gradient across the membrane. This chain is A-type ATP synthase subunit D, found in Thermoplasma volcanium (strain ATCC 51530 / DSM 4299 / JCM 9571 / NBRC 15438 / GSS1).